Consider the following 343-residue polypeptide: Small ribosomal subunit biogenesis GTPase RsgA (343 aa).

The CP-type G domain maps to 116–275; that stretch reads RGQLKPVAAN…LIDSPGIREF (160 aa). Residues 163–166 and 217–225 contribute to the GTP site; these read NKFD and GQSGVGKSS. Positions 299, 304, 306, and 312 each coordinate Zn(2+).

The protein belongs to the TRAFAC class YlqF/YawG GTPase family. RsgA subfamily. Monomer. Associates with 30S ribosomal subunit, binds 16S rRNA. Requires Zn(2+) as cofactor.

The protein localises to the cytoplasm. Functionally, one of several proteins that assist in the late maturation steps of the functional core of the 30S ribosomal subunit. Helps release RbfA from mature subunits. May play a role in the assembly of ribosomal proteins into the subunit. Circularly permuted GTPase that catalyzes slow GTP hydrolysis, GTPase activity is stimulated by the 30S ribosomal subunit. The chain is Small ribosomal subunit biogenesis GTPase RsgA from Pseudomonas fluorescens (strain Pf0-1).